Consider the following 352-residue polypeptide: Protein NDRG4 (352 aa).

A phosphoserine mark is found at S298, S317, and S323. A compositionally biased stretch (low complexity) spans 314–323; that stretch reads RTASLTSASS. The disordered stretch occupies residues 314-352; it reads RTASLTSASSVDGSRPQACTHSESSEGLGQVNHTMEVSC. A compositionally biased stretch (polar residues) spans 330–352; it reads QACTHSESSEGLGQVNHTMEVSC.

The protein belongs to the NDRG family. In terms of processing, phosphorylated in an aortic smooth muscle cell line, following PDGF treatment. As to expression, expressed predominantly in brain and heart (at protein level). In the brain, detected in astrocytes. Isoform 1 and isoform 2 are only expressed in brain. Isoform 3 is expressed in both heart and brain. Up-regulated in glioblastoma multiforme cells.

The protein resides in the cytoplasm. It is found in the cytosol. Functionally, contributes to the maintenance of intracerebral BDNF levels within the normal range, which is necessary for the preservation of spatial learning and the resistance to neuronal cell death caused by ischemic stress. May enhance growth factor-induced ERK1 and ERK2 phosphorylation, including that induced by PDGF and FGF. May attenuate NGF-promoted ELK1 phosphorylation in a microtubule-dependent manner. This is Protein NDRG4 (NDRG4) from Homo sapiens (Human).